Here is a 238-residue protein sequence, read N- to C-terminus: Uridylate kinase (238 aa).

12–15 (KLSG) is an ATP binding site. Residue glycine 54 coordinates UMP. ATP contacts are provided by glycine 55 and arginine 59. Residues aspartate 74 and 135–142 (TGNPYFTT) each bind UMP. ATP contacts are provided by threonine 162, asparagine 163, tyrosine 168, and aspartate 171.

Belongs to the UMP kinase family. Homohexamer.

It localises to the cytoplasm. It catalyses the reaction UMP + ATP = UDP + ADP. Its pathway is pyrimidine metabolism; CTP biosynthesis via de novo pathway; UDP from UMP (UMPK route): step 1/1. Its activity is regulated as follows. Inhibited by UTP. In terms of biological role, catalyzes the reversible phosphorylation of UMP to UDP. The protein is Uridylate kinase of Bradyrhizobium sp. (strain BTAi1 / ATCC BAA-1182).